The sequence spans 224 residues: PKHD-type hydroxylase Sbal195_0750 (224 aa).

The 99-residue stretch at 78 to 176 folds into the Fe2OG dioxygenase domain; sequence QFYPPLFNRY…RTAAFMWLQS (99 aa). His96, Asp98, and His157 together coordinate Fe cation. Arg167 provides a ligand contact to 2-oxoglutarate.

Fe(2+) is required as a cofactor. The cofactor is L-ascorbate.

The protein is PKHD-type hydroxylase Sbal195_0750 of Shewanella baltica (strain OS195).